Reading from the N-terminus, the 500-residue chain is MAPSGGQEAQICDSETFGDSDFVVVANRLPVDLERLPDGSTTWKRSPGGLVTALEPVLRRRRGAWVGWPGVNDDGAEPDLHVLDGPIIQDELELHPVRLSTTDIAQYYEGFSNATLWPLYHDVIVKPLYHREWWDRYVDVNQRFAEAASRAAAHGATVWVQDYQLQLVPKMLRMLRPDLTIGFFLHIPFPPVELFMQMPWRTEIIQGLLGADLVGFHLPGGAQNFLILSRRLVGTDTSRGTVGVRSRFGAAVLGSRTIRVGAFPISVDSGALDHAARDRNIRRRAREIRTELGNPRKILLGVDRLDYTKGIDVRLKAFSELLAEGRVKRDDTVLVQLATPSRERVESYQTLRNDIERQVGHINGEYGEVGHPVVHYLHRPAPRDELIAFFVASDVMLVTPLRDGMNLVAKEYVACRSDLGGALVLSEFTGAAAELRHAYLVNPHDLEGVKDGIEEALNQTEEAGRRRMRSLRRQVLAHDVDRWAQSFLDALAGAHPRGQG.

Arg-28 contacts D-glucose 6-phosphate. Residue 48–49 participates in UDP-alpha-D-glucose binding; that stretch reads GG. The D-glucose 6-phosphate site is built by Tyr-108 and Asp-162. UDP-alpha-D-glucose is bound by residues Arg-304 and Lys-309. D-glucose 6-phosphate is bound at residue Arg-342. 407–411 lines the UDP-alpha-D-glucose pocket; that stretch reads LVAKE.

It belongs to the glycosyltransferase 20 family. Homotetramer.

The enzyme catalyses ADP-alpha-D-glucose + D-glucose 6-phosphate = alpha,alpha-trehalose 6-phosphate + ADP + H(+). The catalysed reaction is CDP-alpha-D-glucose + D-glucose 6-phosphate = alpha,alpha-trehalose 6-phosphate + CDP + H(+). It carries out the reaction GDP-alpha-D-glucose + D-glucose 6-phosphate = alpha,alpha-trehalose 6-phosphate + GDP + H(+). It catalyses the reaction TDP-alpha-D-glucose + D-glucose 6-phosphate = 5-methyl-UDP + alpha,alpha-trehalose 6-phosphate + H(+). The enzyme catalyses D-glucose 6-phosphate + UDP-alpha-D-glucose = alpha,alpha-trehalose 6-phosphate + UDP + H(+). It participates in glycan biosynthesis; trehalose biosynthesis. Probably involved in the osmoprotection via the biosynthesis of trehalose and in the production of glycogen and alpha-glucan via the TreS-Pep2 branch involved in the biosynthesis of maltose-1-phosphate (M1P). Catalyzes the transfer of glucose from UDP-glucose (UDP-Glc) to D-glucose 6-phosphate (Glc-6-P) to form trehalose-6-phosphate. Probably also able to use ADP-Glc, CDP-Glc, GDP-Glc and TDP-Glc as glucosyl donors. This is Trehalose-6-phosphate synthase from Mycobacterium bovis (strain ATCC BAA-935 / AF2122/97).